The primary structure comprises 373 residues: Chaperone protein DnaJ (373 aa).

The region spanning 5-70 (DYYEVLGVAK…QKRAAYDRYG (66 aa)) is the J domain. The segment at 133–211 (GFDTEIRVPS…CDGVGRTRRN (79 aa)) adopts a CR-type zinc-finger fold. Cys-146, Cys-149, Cys-163, Cys-166, Cys-185, Cys-188, Cys-199, and Cys-202 together coordinate Zn(2+). CXXCXGXG motif repeat units follow at residues 146–153 (CDTCHGSG), 163–170 (CRTCGGSG), 185–192 (CPTCHGTG), and 199–206 (CPSCDGVG).

Belongs to the DnaJ family. As to quaternary structure, homodimer. Zn(2+) serves as cofactor.

The protein localises to the cytoplasm. Functionally, participates actively in the response to hyperosmotic and heat shock by preventing the aggregation of stress-denatured proteins and by disaggregating proteins, also in an autonomous, DnaK-independent fashion. Unfolded proteins bind initially to DnaJ; upon interaction with the DnaJ-bound protein, DnaK hydrolyzes its bound ATP, resulting in the formation of a stable complex. GrpE releases ADP from DnaK; ATP binding to DnaK triggers the release of the substrate protein, thus completing the reaction cycle. Several rounds of ATP-dependent interactions between DnaJ, DnaK and GrpE are required for fully efficient folding. Also involved, together with DnaK and GrpE, in the DNA replication of plasmids through activation of initiation proteins. In Bordetella bronchiseptica (strain ATCC BAA-588 / NCTC 13252 / RB50) (Alcaligenes bronchisepticus), this protein is Chaperone protein DnaJ.